Here is a 458-residue protein sequence, read N- to C-terminus: Argininosuccinate lyase (458 aa).

It belongs to the lyase 1 family. Argininosuccinate lyase subfamily.

The protein resides in the cytoplasm. It carries out the reaction 2-(N(omega)-L-arginino)succinate = fumarate + L-arginine. It participates in amino-acid biosynthesis; L-arginine biosynthesis; L-arginine from L-ornithine and carbamoyl phosphate: step 3/3. In Hydrogenobaculum sp. (strain Y04AAS1), this protein is Argininosuccinate lyase.